The sequence spans 260 residues: MPMTPSEFKNRLLFGSLPRSSSDPTDLQFTEPNVPPSLFSLPEHNDDTATDMAPDQETEQSVSKSIARQALALLVVYLSLGVLIYWLTLDSDNAYQTHPVAVALYFFVVTFCGFLIVHFVVKIGWLDSFCFSVMMVTTVGFGDRAFNTWLGTFLAAVWLLVSTLAVARAFLFLADARADKRNRERAKKVLGESISISQFFAADIDNDGRLSLAEFAIYKLKQMEKITQEDFIQICNQFDKLDRTQSGRITLVDLTTATSV.

The disordered stretch occupies residues 1–34 (MPMTPSEFKNRLLFGSLPRSSSDPTDLQFTEPNV). Residues 1–68 (MPMTPSEFKN…EQSVSKSIAR (68 aa)) are Cytoplasmic-facing. The segment covering 18–31 (PRSSSDPTDLQFTE) has biased composition (polar residues). The helical transmembrane segment at 69–89 (QALALLVVYLSLGVLIYWLTL) threads the bilayer. Positions 127–146 (DSFCFSVMMVTTVGFGDRAF) form an intramembrane region, pore-forming. Residues 153–173 (FLAAVWLLVSTLAVARAFLFL) traverse the membrane as a helical segment. At 174–260 (ADARADKRNR…LVDLTTATSV (87 aa)) the chain is on the cytoplasmic side. EF-hand domains follow at residues 190-225 (LGESISISQFFAADIDNDGRLSLAEFAIYKLKQMEK) and 229-256 (EDFIQICNQFDKLDRTQSGRITLVDLTT). Residues aspartate 203, aspartate 205, aspartate 207, arginine 209, glutamate 214, aspartate 242, serine 246, arginine 248, and aspartate 253 each contribute to the Ca(2+) site.

The protein belongs to the two pore domain potassium channel (TC 1.A.1.7) family. In terms of assembly, homotetramer. As to expression, expressed in hydathodes and the vascular tissues of roots, stems, leaves and flowers.

It is found in the vacuole membrane. Its function is as follows. Probable calcium-activated potassium channel. The sequence is that of Potassium inward rectifier (Kir)-like channel 3 (KCO3) from Arabidopsis thaliana (Mouse-ear cress).